Consider the following 196-residue polypeptide: ATP-dependent Clp protease proteolytic subunit (196 aa).

Ser-99 acts as the Nucleophile in catalysis. The active site involves His-124.

Belongs to the peptidase S14 family. In terms of assembly, fourteen ClpP subunits assemble into 2 heptameric rings which stack back to back to give a disk-like structure with a central cavity, resembling the structure of eukaryotic proteasomes.

It localises to the cytoplasm. It carries out the reaction Hydrolysis of proteins to small peptides in the presence of ATP and magnesium. alpha-casein is the usual test substrate. In the absence of ATP, only oligopeptides shorter than five residues are hydrolyzed (such as succinyl-Leu-Tyr-|-NHMec, and Leu-Tyr-Leu-|-Tyr-Trp, in which cleavage of the -Tyr-|-Leu- and -Tyr-|-Trp bonds also occurs).. Its function is as follows. Cleaves peptides in various proteins in a process that requires ATP hydrolysis. Has a chymotrypsin-like activity. Plays a major role in the degradation of misfolded proteins. This chain is ATP-dependent Clp protease proteolytic subunit, found in Nitratiruptor sp. (strain SB155-2).